Consider the following 97-residue polypeptide: U6-theraphotoxin-Hhn1a 3 (97 aa).

An N-terminal signal peptide occupies residues 1–33 (MLIKQFSRRSKNTKVQILLAFAALFVLAVGSYA). The propeptide occupies 34 to 61 (SESKKLDLRDALFSAMFSADYQLNPQER). Cystine bridges form between Cys63-Cys77, Cys70-Cys82, and Cys76-Cys89.

It belongs to the neurotoxin 10 (Hwtx-1) family. 12 (Hntx-12) subfamily. In terms of tissue distribution, expressed by the venom gland.

It is found in the secreted. Its function is as follows. Ion channel inhibitor. The protein is U6-theraphotoxin-Hhn1a 3 of Cyriopagopus hainanus (Chinese bird spider).